Consider the following 640-residue polypeptide: 2-hydroxyacyl-CoA lyase 2 (640 aa).

The helical transmembrane segment at 2-22 (VLFLIIAAIIIGLLLWKWLDV) threads the bilayer. Thiamine diphosphate is bound at residue glutamate 102. The thiamine pyrophosphate binding stretch occupies residues 477 to 557 (DFVGSAAYIV…VIGIVGNDAC (81 aa)). Residues aspartate 528 and asparagine 554 each coordinate Mg(2+).

This sequence belongs to the TPP enzyme family. Mg(2+) serves as cofactor. The cofactor is thiamine diphosphate.

Its subcellular location is the endoplasmic reticulum membrane. It catalyses the reaction 2-hydroxyoctadecanoyl-CoA = heptadecanal + formyl-CoA. The catalysed reaction is (2R)-hydroxyhexadecanoyl-CoA = pentadecanal + formyl-CoA. In terms of biological role, endoplasmic reticulum 2-OH acyl-CoA lyase involved in the cleavage (C1 removal) reaction in the fatty acid alpha-oxydation in a thiamine pyrophosphate (TPP)-dependent manner. This chain is 2-hydroxyacyl-CoA lyase 2, found in Caenorhabditis elegans.